We begin with the raw amino-acid sequence, 501 residues long: Aldehyde dehydrogenase mpl4 (501 aa).

231 to 236 contacts NAD(+); the sequence is GSTASG. Active-site residues include glutamate 253 and cysteine 287.

This sequence belongs to the aldehyde dehydrogenase family.

The enzyme catalyses an aldehyde + NAD(+) + H2O = a carboxylate + NADH + 2 H(+). Its pathway is mycotoxin biosynthesis. Its function is as follows. Aldehyde dehydrogenase; part of the gene cluster that mediates the biosynthesis of the mycotoxin citrinin, a hepato-nephrotoxic compound to humans due to inhibition of respiration complex III. The pathway begins with the synthesis of a keto-aldehyde intermediate by the citrinin PKS (pksCT) from successive condensations of 4 malonyl-CoA units, presumably with a simple acetyl-CoA starter unit. Release of the keto-aldehyde intermediate is consistent with the presence of the C-terminal reductive release domain. Mp11 collaborates with pksCT by catalyzing the hydrolysis of ACP-bound acyl intermediates to free the ACP from stalled intermediates. Mpl2 then catalyzes the oxidation of the C-12 methyl of the ketone intermediate to an alcohol intermediate which is further oxidized by the oxidoreductase mpl7 to produce a bisaldehyde intermediate. The fourth catalytic step is catalyzed by the mpl4 aldehyde dehydrogenase. The final transformation is the reduction of C-3 by mpl6 to provide the chemically stable citrinin nucleus. The chain is Aldehyde dehydrogenase mpl4 from Monascus purpureus (Red mold).